We begin with the raw amino-acid sequence, 450 residues long: Phosphoglucosamine mutase (450 aa).

S101 (phosphoserine intermediate) is an active-site residue. Positions 101, 240, 242, and 244 each coordinate Mg(2+). A Phosphoserine modification is found at S101.

Belongs to the phosphohexose mutase family. It depends on Mg(2+) as a cofactor. Activated by phosphorylation.

The enzyme catalyses alpha-D-glucosamine 1-phosphate = D-glucosamine 6-phosphate. Catalyzes the conversion of glucosamine-6-phosphate to glucosamine-1-phosphate. In Streptococcus equi subsp. zooepidemicus (strain H70), this protein is Phosphoglucosamine mutase.